The chain runs to 641 residues: Tetracycline resistance protein TetS (641 aa).

The tr-type G domain occupies 1–242 (MKIINIGILA…VITSKLFSPT (242 aa)). Residues 10–17 (AHVDAGKT), 74–78 (DTPGH), and 128–131 (NKID) each bind GTP.

Belongs to the TRAFAC class translation factor GTPase superfamily. Classic translation factor GTPase family. TetM/TetO subfamily.

Abolishes the inhibitory effect of tetracyclin on protein synthesis by a non-covalent modification of the ribosomes. The sequence is that of Tetracycline resistance protein TetS (tetS) from Listeria monocytogenes.